Here is a 176-residue protein sequence, read N- to C-terminus: ATP-dependent protease subunit HslV (176 aa).

The active site involves T5. Na(+)-binding residues include A161, C164, and T167.

This sequence belongs to the peptidase T1B family. HslV subfamily. As to quaternary structure, a double ring-shaped homohexamer of HslV is capped on each side by a ring-shaped HslU homohexamer. The assembly of the HslU/HslV complex is dependent on binding of ATP.

It localises to the cytoplasm. The enzyme catalyses ATP-dependent cleavage of peptide bonds with broad specificity.. Its activity is regulated as follows. Allosterically activated by HslU binding. In terms of biological role, protease subunit of a proteasome-like degradation complex believed to be a general protein degrading machinery. This Caldicellulosiruptor saccharolyticus (strain ATCC 43494 / DSM 8903 / Tp8T 6331) protein is ATP-dependent protease subunit HslV.